Here is a 252-residue protein sequence, read N- to C-terminus: MERLLIVNADDFGLSKGQNYGIVEACRNGVVTSTTALVNGDAIDHAAQLCRDVPKLAVGMHFVLTLGKPLTAMPGLTREGLLGKWIWQMAEEETLPLDEISHELECQYQRFIDLFGREPTHLDSHHHVHMFPQIFPIVAMFAAERGVALRIDRQSVLNADDLPVALRSSQGFSSEFYGDAISEALFLQVLDASADRGEKSLEVMCHPAFIDNIIRQSAYCYPRLTELDVLTSASLKYAIAERGYRLGSFLDV.

Positions 61 and 125 each coordinate Mg(2+).

The protein belongs to the YdjC deacetylase family. ChbG subfamily. As to quaternary structure, homodimer. It depends on Mg(2+) as a cofactor.

The protein localises to the cytoplasm. It catalyses the reaction N,N'-diacetylchitobiose + H2O = N-acetyl-beta-D-glucosaminyl-(1-&gt;4)-D-glucosamine + acetate. The enzyme catalyses diacetylchitobiose-6'-phosphate + H2O = N'-monoacetylchitobiose-6'-phosphate + acetate. It participates in glycan degradation; chitin degradation. In terms of biological role, involved in the degradation of chitin. ChbG is essential for growth on the acetylated chitooligosaccharides chitobiose and chitotriose but is dispensable for growth on cellobiose and chitosan dimer, the deacetylated form of chitobiose. Deacetylation of chitobiose-6-P and chitotriose-6-P is necessary for both the activation of the chb promoter by the regulatory protein ChbR and the hydrolysis of phosphorylated beta-glucosides by the phospho-beta-glucosidase ChbF. Catalyzes the removal of only one acetyl group from chitobiose-6-P to yield monoacetylchitobiose-6-P, the inducer of ChbR and the substrate of ChbF. The sequence is that of Chitooligosaccharide deacetylase from Citrobacter koseri (strain ATCC BAA-895 / CDC 4225-83 / SGSC4696).